The primary structure comprises 460 residues: 3-isopropylmalate dehydratase large subunit (460 aa).

Residues Cys-338, Cys-398, and Cys-401 each coordinate [4Fe-4S] cluster.

Belongs to the aconitase/IPM isomerase family. LeuC type 1 subfamily. In terms of assembly, heterodimer of LeuC and LeuD. It depends on [4Fe-4S] cluster as a cofactor.

It catalyses the reaction (2R,3S)-3-isopropylmalate = (2S)-2-isopropylmalate. It functions in the pathway amino-acid biosynthesis; L-leucine biosynthesis; L-leucine from 3-methyl-2-oxobutanoate: step 2/4. In terms of biological role, catalyzes the isomerization between 2-isopropylmalate and 3-isopropylmalate, via the formation of 2-isopropylmaleate. This Streptococcus thermophilus (strain ATCC BAA-250 / LMG 18311) protein is 3-isopropylmalate dehydratase large subunit.